Consider the following 200-residue polypeptide: Large ribosomal subunit protein uL4 (200 aa).

Positions Gly-38 to Thr-72 are disordered.

The protein belongs to the universal ribosomal protein uL4 family. In terms of assembly, part of the 50S ribosomal subunit.

In terms of biological role, one of the primary rRNA binding proteins, this protein initially binds near the 5'-end of the 23S rRNA. It is important during the early stages of 50S assembly. It makes multiple contacts with different domains of the 23S rRNA in the assembled 50S subunit and ribosome. Forms part of the polypeptide exit tunnel. The protein is Large ribosomal subunit protein uL4 of Pseudomonas entomophila (strain L48).